A 333-amino-acid polypeptide reads, in one-letter code: Adenosine deaminase (333 aa).

Histidine 12 and histidine 14 together coordinate Zn(2+). Substrate-binding residues include histidine 14, aspartate 16, and glycine 170. Histidine 197 is a binding site for Zn(2+). The active-site Proton donor is glutamate 200. Aspartate 278 serves as a coordination point for Zn(2+). Aspartate 279 serves as a coordination point for substrate.

Belongs to the metallo-dependent hydrolases superfamily. Adenosine and AMP deaminases family. Adenosine deaminase subfamily. The cofactor is Zn(2+).

It carries out the reaction adenosine + H2O + H(+) = inosine + NH4(+). The catalysed reaction is 2'-deoxyadenosine + H2O + H(+) = 2'-deoxyinosine + NH4(+). Catalyzes the hydrolytic deamination of adenosine and 2-deoxyadenosine. This chain is Adenosine deaminase, found in Escherichia coli O157:H7.